A 409-amino-acid chain; its full sequence is Phenoxybenzoate dioxygenase subunit alpha (409 aa).

The Rieske domain maps to 45–149 (WQPVALSADV…VEERYGLVFA (105 aa)). [2Fe-2S] cluster contacts are provided by Cys85, His87, Cys104, and His107. Fe cation-binding residues include His210 and His215.

Belongs to the bacterial ring-hydroxylating dioxygenase alpha subunit family. As to quaternary structure, this dioxygenase system consists of two proteins: the alpha subunit (PobA) and a subunit (PobB) that acts as a ferredoxin and a ferredoxin reductase. Requires [2Fe-2S] cluster as cofactor. Fe cation serves as cofactor.

The protein operates within aromatic compound metabolism; carboxydiphenyl ether degradation. Functionally, degrades exclusively diarylether compounds having carboxyl groups in the 3- or 4-position. Yields a hemiacetal that spontaneously hydrolyzes to phenol and protocatechuate. The polypeptide is Phenoxybenzoate dioxygenase subunit alpha (pobA) (Ectopseudomonas oleovorans (Pseudomonas oleovorans)).